The chain runs to 23 residues: Aurein-4.4 (23 aa).

It belongs to the frog skin active peptide (FSAP) family. Aurein subfamily. In terms of tissue distribution, expressed by the skin dorsal glands.

It is found in the secreted. Has no antimicrobial or anticancer activity. The polypeptide is Aurein-4.4 (Ranoidea aurea (Green and golden bell frog)).